Here is a 215-residue protein sequence, read N- to C-terminus: TLD domain-containing protein 2 (215 aa).

The disordered stretch occupies residues 1–46 (MRGLRWRYTRLPSQVEDTLSGEEGNEEEEEEEAAPDPAAAPEDPTV). Positions 19–34 (LSGEEGNEEEEEEEAA) are enriched in acidic residues. One can recognise a TLDc domain in the interval 54 to 215 (QVLSASEIRQ…IQELEAWLLS (162 aa)).

The protein belongs to the OXR1 family.

The sequence is that of TLD domain-containing protein 2 (TLDC2) from Homo sapiens (Human).